The primary structure comprises 210 residues: Imidazoleglycerol-phosphate dehydratase (210 aa).

The protein belongs to the imidazoleglycerol-phosphate dehydratase family.

It is found in the cytoplasm. The enzyme catalyses D-erythro-1-(imidazol-4-yl)glycerol 3-phosphate = 3-(imidazol-4-yl)-2-oxopropyl phosphate + H2O. It functions in the pathway amino-acid biosynthesis; L-histidine biosynthesis; L-histidine from 5-phospho-alpha-D-ribose 1-diphosphate: step 6/9. This chain is Imidazoleglycerol-phosphate dehydratase, found in Mycobacterium bovis (strain ATCC BAA-935 / AF2122/97).